The chain runs to 364 residues: DNA polymerase IV (364 aa).

Residues 8–189 form the UmuC domain; the sequence is IIHIDMDCYF…LPLTKIPGVG (182 aa). The Mg(2+) site is built by Asp-12 and Asp-107. The active site involves Glu-108.

It belongs to the DNA polymerase type-Y family. Monomer. The cofactor is Mg(2+).

The protein localises to the cytoplasm. The catalysed reaction is DNA(n) + a 2'-deoxyribonucleoside 5'-triphosphate = DNA(n+1) + diphosphate. Poorly processive, error-prone DNA polymerase involved in untargeted mutagenesis. Copies undamaged DNA at stalled replication forks, which arise in vivo from mismatched or misaligned primer ends. These misaligned primers can be extended by PolIV. Exhibits no 3'-5' exonuclease (proofreading) activity. May be involved in translesional synthesis, in conjunction with the beta clamp from PolIII. The chain is DNA polymerase IV from Shewanella woodyi (strain ATCC 51908 / MS32).